We begin with the raw amino-acid sequence, 1772 residues long: Putative stereocilin-like protein (1772 aa).

The signal sequence occupies residues 1-25; sequence MALSLWPLLLLLLLLLLLSFAVTLA. N-linked (GlcNAc...) asparagine glycosylation is found at Asn65, Asn427, Asn476, and Asn565.

This sequence belongs to the stereocilin family.

The protein resides in the secreted. This is Putative stereocilin-like protein (STRCP1) from Homo sapiens (Human).